We begin with the raw amino-acid sequence, 423 residues long: Serine--tRNA ligase (423 aa).

Position 231–233 (Thr-231–Glu-233) interacts with L-serine. ATP is bound at residue Arg-262–Glu-264. Residue Glu-285 participates in L-serine binding. ATP is bound at residue Glu-349–Ser-352. Position 384 (Ser-384) interacts with L-serine.

Belongs to the class-II aminoacyl-tRNA synthetase family. Type-1 seryl-tRNA synthetase subfamily. In terms of assembly, homodimer. The tRNA molecule binds across the dimer.

The protein resides in the cytoplasm. It catalyses the reaction tRNA(Ser) + L-serine + ATP = L-seryl-tRNA(Ser) + AMP + diphosphate + H(+). The catalysed reaction is tRNA(Sec) + L-serine + ATP = L-seryl-tRNA(Sec) + AMP + diphosphate + H(+). The protein operates within aminoacyl-tRNA biosynthesis; selenocysteinyl-tRNA(Sec) biosynthesis; L-seryl-tRNA(Sec) from L-serine and tRNA(Sec): step 1/1. Functionally, catalyzes the attachment of serine to tRNA(Ser). Is also able to aminoacylate tRNA(Sec) with serine, to form the misacylated tRNA L-seryl-tRNA(Sec), which will be further converted into selenocysteinyl-tRNA(Sec). This is Serine--tRNA ligase from Lactococcus lactis subsp. lactis (strain IL1403) (Streptococcus lactis).